The following is a 365-amino-acid chain: Protein Wnt-6 (365 aa).

The first 24 residues, 1–24 (MLPPLPSRLGLLLLLLLCPAHVGG), serve as a signal peptide directing secretion. Intrachain disulfides connect Cys-76–Cys-87, Cys-124–Cys-132, Cys-134–Cys-172, Cys-222–Cys-236, Cys-224–Cys-231, Cys-294–Cys-325, Cys-310–Cys-320, Cys-324–Cys-364, Cys-340–Cys-355, Cys-342–Cys-352, and Cys-347–Cys-348. Asn-86 carries an N-linked (GlcNAc...) asparagine glycan. Positions 140–158 (RAPPRPSGLPGTPGPPGPA) are enriched in pro residues. Residues 140 to 164 (RAPPRPSGLPGTPGPPGPAGSPEGS) are disordered. Residue Ser-228 is the site of O-palmitoleoyl serine; by PORCN attachment. Residue Asn-311 is glycosylated (N-linked (GlcNAc...) asparagine).

Belongs to the Wnt family. In terms of assembly, interacts with PORCN. Post-translationally, palmitoleoylation is required for efficient binding to frizzled receptors. Depalmitoleoylation leads to Wnt signaling pathway inhibition. In terms of tissue distribution, expressed in gastric cancer cell lines and gastric cancer tissues (at protein level). Detected in the apical gland region of the gastric foveolar epithelium (at protein level).

The protein localises to the secreted. It is found in the extracellular space. Its subcellular location is the extracellular matrix. In terms of biological role, ligand for members of the frizzled family of seven transmembrane receptors. Probable developmental protein. May be a signaling molecule which affects the development of discrete regions of tissues. Is likely to signal over only few cell diameters. Together with CAV1 may promote chemoresistance of gastric cancer cells to DNA-damaging anthracycline drugs through the activation of the canonical Wnt receptor signaling pathway. The chain is Protein Wnt-6 (WNT6) from Homo sapiens (Human).